A 375-amino-acid chain; its full sequence is Negative elongation factor E (375 aa).

Positions 7–36 form a coiled coil; it reads GLSEEEEALQKKFNKLKKKKKALLALKKQS. The interval 30–58 is disordered; sequence LALKKQSSSGPASQGGVKRSLSEQPVVDT. S51 carries the phosphoserine modification. Residue K78 forms a Glycyl lysine isopeptide (Lys-Gly) (interchain with G-Cter in SUMO1); alternate linkage. K78 participates in a covalent cross-link: Glycyl lysine isopeptide (Lys-Gly) (interchain with G-Cter in SUMO2); alternate. Residues 79 to 262 are disordered; it reads AETKNSGFKR…SDSFPERRAP (184 aa). K82 is covalently cross-linked (Glycyl lysine isopeptide (Lys-Gly) (interchain with G-Cter in SUMO2)). Residues 90–101 show a composition bias toward basic and acidic residues; that stretch reads RTLEGKLKDPEK. Phosphoserine occurs at positions 113 and 115. E122 bears the PolyADP-ribosyl glutamic acid mark. Residues S131 and S139 each carry the phosphoserine modification. Position 151 is a polyADP-ribosyl glutamic acid (E151). The segment covering 155 to 167 has biased composition (low complexity); sequence APGAGDGPPRGFD. The residue at position 172 (E172) is a PolyADP-ribosyl glutamic acid. 4 positions are modified to phosphoserine: S179, S181, S185, and S187. 4 tandem repeats follow at residues 184-185, 186-187, 188-189, and 190-191. Residues 184 to 247 are 32 X 2 AA approximate tandem repeats of R-[DSE]; that stretch reads RSRSRDRSHD…RDRDRERDRE (64 aa). Residues 186–260 show a composition bias toward basic and acidic residues; that stretch reads RSRDRSHDRS…RRSDSFPERR (75 aa). S191 bears the Phosphoserine mark. One copy of the 5; approximate repeat lies at 192–193; that stretch reads HD. Repeat copies occupy residues 194-195, 196-197, 198-199, and 200-201. The 10; approximate repeat unit spans residues 202–203; sequence KE. A run of 7 repeats spans residues 204–205, 206–207, 208–209, 210–211, 212–213, 214–215, and 216–217. An 18; approximate repeat occupies 218–219; sequence KD. One copy of the 19; approximate repeat lies at 220–221; the sequence is KD. 4 repeat units span residues 222-223, 224-225, 226-227, and 228-229. A 24; approximate repeat occupies 230–231; the sequence is KE. Repeat copies occupy residues 232–233, 234–235, 236–237, 238–239, 240–241, 242–243, 244–245, and 246–247. S253 and S255 each carry phosphoserine. One can recognise an RRM domain in the interval 266-336; the sequence is NTLYVYGEDM…VQLKVNIARK (71 aa). A phosphothreonine mark is found at T276 and T278. S285 and S357 each carry phosphoserine.

It belongs to the RRM NELF-E family. The NELF complex is composed of NELFA, NELFB, NELFCD and NELFE. Interacts with NELFB. In terms of processing, phosphorylated by the P-TEFb complex at sites next to its RNA recognition motif, promoting its release from chromatin. Sumoylated. Post-translationally, poly-ADP-ribosylated by PARP1, thereby preventing RNA-binding and relieving transcription pausing.

It localises to the nucleus. The protein localises to the chromosome. Functionally, essential component of the NELF complex, a complex that negatively regulates the elongation of transcription by RNA polymerase II. The NELF complex, which acts via an association with the DSIF complex and causes transcriptional pausing, is counteracted by the P-TEFb kinase complex. Provides the strongest RNA binding activity of the NELF complex and may initially recruit the NELF complex to RNA. The protein is Negative elongation factor E (Nelfe) of Mus musculus (Mouse).